Consider the following 552-residue polypeptide: HTH-type transcriptional regulator SgrR (552 aa).

The solute-binding stretch occupies residues 163-493; sequence ELKPDLAHHW…DDLDTDAQQW (331 aa).

Activates the small RNA gene sgrS under glucose-phosphate stress conditions as well as yfdZ. Represses its own transcription under both stress and non-stress conditions. Might act as a sensor of the intracellular accumulation of phosphoglucose by binding these molecules in its C-terminal solute-binding domain. The protein is HTH-type transcriptional regulator SgrR of Pectobacterium atrosepticum (strain SCRI 1043 / ATCC BAA-672) (Erwinia carotovora subsp. atroseptica).